A 332-amino-acid polypeptide reads, in one-letter code: Autoinducer 2 import system permease protein LsrD (332 aa).

10 helical membrane-spanning segments follow: residues 7-27, 45-65, 70-90, 91-111, 118-138, 162-182, 216-236, 240-260, 261-281, and 288-308; these read YSWE…FGLI, ICIG…GMDI, TIGL…PLPL, AIII…GLII, LVIT…LSGM, FLGI…FWLL, VYAM…SYFG, SDLG…GGAN, IYGG…VGFL, and AGVP…VVVV.

The protein belongs to the binding-protein-dependent transport system permease family. AraH/RbsC subfamily. The complex is composed of two ATP-binding proteins (LsrA), two transmembrane proteins (LsrC and LsrD) and a solute-binding protein (LsrB).

The protein localises to the cell inner membrane. Part of the ABC transporter complex LsrABCD involved in autoinducer 2 (AI-2) import. Probably responsible for the translocation of the substrate across the membrane. The protein is Autoinducer 2 import system permease protein LsrD (lsrD) of Salmonella typhi.